The chain runs to 309 residues: Taste receptor type 2 member 31 (309 aa).

Over 1–2 (MT) the chain is Extracellular. A helical transmembrane segment spans residues 3–23 (TFIPIIFSSLVMVMFVTGNFA). The Cytoplasmic segment spans residues 24 to 55 (NGFIALVNSIESVKRQKISYADQILTALAVSR). A helical transmembrane segment spans residues 56–76 (IGLLWVLLLNWYSTVLNPAFY). At 77 to 100 (SVEVRTTAYNVWAVTGHFSNWLAT) the chain is on the extracellular side. Residues 101–121 (SLSIFYLLKIANFSNLIFLHL) form a helical membrane-spanning segment. Residues 122-126 (KRRVK) lie on the Cytoplasmic side of the membrane. A helical transmembrane segment spans residues 127-147 (SVILVMLLGPLLFLACQLFVI). The Extracellular portion of the chain corresponds to 148 to 181 (NMKEIVQTKEYEGNXTWKIKLRSAVYLSDATVTT). Asn161 is a glycosylation site (N-linked (GlcNAc...) asparagine). A helical membrane pass occupies residues 182-202 (LGNLVPFTLTLLCFLLLICSL). Over 203–229 (CKHLKKMQLHGKGSQDPSMKVHIKALQ) the chain is Cytoplasmic. The helical transmembrane segment at 230–250 (TVTSFLLLCAIYFLSIMISVW) threads the bilayer. The Extracellular segment spans residues 251–259 (SLGSLKNKP). The chain crosses the membrane as a helical span at residues 260 to 280 (VFMFCKAMRFSYPSIHPFILI). Residues 281 to 309 (WGNKKLKQTFLSVLQQVRYWVKGEKPSSP) are Cytoplasmic-facing.

Belongs to the G-protein coupled receptor T2R family.

It is found in the membrane. In terms of biological role, receptor that may play a role in the perception of bitterness and is gustducin-linked. May play a role in sensing the chemical composition of the gastrointestinal content. The activity of this receptor may stimulate alpha gustducin, mediate PLC-beta-2 activation and lead to the gating of TRPM5. The polypeptide is Taste receptor type 2 member 31 (TAS2R31) (Gorilla gorilla gorilla (Western lowland gorilla)).